The chain runs to 171 residues: T-cell surface glycoprotein CD3 delta chain (171 aa).

The signal sequence occupies residues 1 to 21; sequence MEHSTFLSGLVLATLLSQVSP. Residues 22 to 105 are Extracellular-facing; sequence FKIPVEELED…CVELDPATLA (84 aa). A disulfide bridge connects residues Cys37 and Cys73. N-linked (GlcNAc...) asparagine glycans are attached at residues Asn38, Asn54, and Asn74. A helical transmembrane segment spans residues 106-126; the sequence is GIIVTDVIATLLLALGVFCFA. Residues 127-171 are Cytoplasmic-facing; sequence GHETGRLSGAADTQALLRNDQVYQPLRDRDDAQYSRLGGNWARNK. Residues 138 to 166 enclose the ITAM domain; it reads DTQALLRNDQVYQPLRDRDDAQYSRLGGN. A phosphotyrosine mark is found at Tyr149 and Tyr160.

As to quaternary structure, the TCR-CD3 complex is composed of a CD3D/CD3E and a CD3G/CD3E heterodimers that preferentially associate with TCRalpha and TCRbeta, respectively, to form TCRalpha/CD3E/CD3G and TCRbeta/CD3G/CD3E trimers. In turn, the hexamer interacts with CD3Z homodimer to form the TCR-CD3 complex. Alternatively, TCRalpha and TCRbeta can be replaced by TCRgamma and TCRdelta. Interacts with coreceptors CD4 and CD8. Phosphorylated on Tyr residues after T-cell receptor triggering by LCK in association with CD4/CD8. In terms of tissue distribution, CD3D is mostly present on T-lymphocytes with its TCR-CD3 partners. Present also in fetal NK-cells.

Its subcellular location is the cell membrane. Its function is as follows. Part of the TCR-CD3 complex present on T-lymphocyte cell surface that plays an essential role in adaptive immune response. When antigen presenting cells (APCs) activate T-cell receptor (TCR), TCR-mediated signals are transmitted across the cell membrane by the CD3 chains CD3D, CD3E, CD3G and CD3Z. All CD3 chains contain immunoreceptor tyrosine-based activation motifs (ITAMs) in their cytoplasmic domain. Upon TCR engagement, these motifs become phosphorylated by Src family protein tyrosine kinases LCK and FYN, resulting in the activation of downstream signaling pathways. In addition of this role of signal transduction in T-cell activation, CD3D plays an essential role in thymocyte differentiation. Indeed, participates in correct intracellular TCR-CD3 complex assembly and surface expression. In absence of a functional TCR-CD3 complex, thymocytes are unable to differentiate properly. Interacts with CD4 and CD8 and thus serves to establish a functional link between the TCR and coreceptors CD4 and CD8, which is needed for activation and positive selection of CD4 or CD8 T-cells. The chain is T-cell surface glycoprotein CD3 delta chain (CD3D) from Macaca fascicularis (Crab-eating macaque).